A 302-amino-acid chain; its full sequence is Transmembrane protein 191 (302 aa).

A coiled-coil region spans residues 5–147 (QEQLLQLQKD…HLELAEAKFS (143 aa)). Positions 39-66 (LTGRLEELRERERSLQRRRSQASRAIRG) are disordered. Residues 42–53 (RLEELRERERSL) show a composition bias toward basic and acidic residues. Residues 242–262 (LQTLLLLPLGFLVLPLIYVVL) traverse the membrane as a helical segment.

The protein belongs to the TMEM191 family.

The protein resides in the membrane. The polypeptide is Transmembrane protein 191 (Mus musculus (Mouse)).